Consider the following 238-residue polypeptide: Probable transcriptional regulatory protein MGAS10750_Spy0264 (238 aa).

Belongs to the TACO1 family. YeeN subfamily.

The protein resides in the cytoplasm. This Streptococcus pyogenes serotype M4 (strain MGAS10750) protein is Probable transcriptional regulatory protein MGAS10750_Spy0264.